Consider the following 119-residue polypeptide: MVKRSDKVGEQIHKIISELLIKGLKDPRIGFLTITGVKMTPDLRQATVYFTVHGSDEDKKNSEAGLNSAKGYIRKEIGQALKMRFVPEVLFKYDTSLDYGQHIESILKEIGATDDGEQS.

The protein belongs to the RbfA family. In terms of assembly, monomer. Binds 30S ribosomal subunits, but not 50S ribosomal subunits or 70S ribosomes.

The protein localises to the cytoplasm. Its function is as follows. One of several proteins that assist in the late maturation steps of the functional core of the 30S ribosomal subunit. Associates with free 30S ribosomal subunits (but not with 30S subunits that are part of 70S ribosomes or polysomes). Required for efficient processing of 16S rRNA. May interact with the 5'-terminal helix region of 16S rRNA. In Citrifermentans bemidjiense (strain ATCC BAA-1014 / DSM 16622 / JCM 12645 / Bem) (Geobacter bemidjiensis), this protein is Ribosome-binding factor A.